The primary structure comprises 55 residues: Hydrophobic protein LTI6B (55 aa).

2 helical membrane passes run 8-28 (IDIL…FGCG) and 31-51 (FWIC…YAIY).

This sequence belongs to the UPF0057 (PMP3) family.

Its subcellular location is the membrane. Functionally, plays a role in the regulation of membrane potential. Could mediate a proton leak. The protein is Hydrophobic protein LTI6B (LTI6B) of Oryza sativa subsp. indica (Rice).